Consider the following 803-residue polypeptide: Phenylalanine--tRNA ligase beta subunit (803 aa).

Residues 39-151 form the tRNA-binding domain; that stretch reads SMKFSGIKIG…KNAIIGEDIK (113 aa). Residues 406-482 enclose the B5 domain; sequence PKKILIKLYK…RFYGFEKIPI (77 aa). Residues Asp466 and Asp470 each contribute to the Mg(2+) site. In terms of domain architecture, FDX-ACB spans 707–800; it reads SDIPFNYRDI…LKKNFLIEIR (94 aa).

Belongs to the phenylalanyl-tRNA synthetase beta subunit family. Type 1 subfamily. Tetramer of two alpha and two beta subunits. Mg(2+) serves as cofactor.

Its subcellular location is the cytoplasm. The catalysed reaction is tRNA(Phe) + L-phenylalanine + ATP = L-phenylalanyl-tRNA(Phe) + AMP + diphosphate + H(+). In Wigglesworthia glossinidia brevipalpis, this protein is Phenylalanine--tRNA ligase beta subunit.